The chain runs to 158 residues: Ribosome maturation factor RimP (158 aa).

It belongs to the RimP family.

It localises to the cytoplasm. In terms of biological role, required for maturation of 30S ribosomal subunits. This Pseudomonas putida (strain ATCC 47054 / DSM 6125 / CFBP 8728 / NCIMB 11950 / KT2440) protein is Ribosome maturation factor RimP.